The sequence spans 79 residues: Small ribosomal subunit protein bS18 (79 aa).

The protein belongs to the bacterial ribosomal protein bS18 family. In terms of assembly, part of the 30S ribosomal subunit. Forms a tight heterodimer with protein bS6.

In terms of biological role, binds as a heterodimer with protein bS6 to the central domain of the 16S rRNA, where it helps stabilize the platform of the 30S subunit. The chain is Small ribosomal subunit protein bS18 from Listeria innocua serovar 6a (strain ATCC BAA-680 / CLIP 11262).